The sequence spans 464 residues: Cysteine--tRNA ligase (464 aa).

Cysteine 28 is a binding site for Zn(2+). Residues 30 to 40 carry the 'HIGH' region motif; sequence VTVYDFCHIGH. 3 residues coordinate Zn(2+): cysteine 209, histidine 234, and glutamate 238. Residues 266–270 carry the 'KMSKS' region motif; the sequence is KMSKS. Residue lysine 269 participates in ATP binding.

This sequence belongs to the class-I aminoacyl-tRNA synthetase family. Monomer. It depends on Zn(2+) as a cofactor.

It is found in the cytoplasm. The catalysed reaction is tRNA(Cys) + L-cysteine + ATP = L-cysteinyl-tRNA(Cys) + AMP + diphosphate. The polypeptide is Cysteine--tRNA ligase (cysS) (Buchnera aphidicola subsp. Acyrthosiphon pisum (strain APS) (Acyrthosiphon pisum symbiotic bacterium)).